The chain runs to 86 residues: Large ribosomal subunit protein bL31B (86 aa).

Belongs to the bacterial ribosomal protein bL31 family. Type B subfamily. Part of the 50S ribosomal subunit.

This chain is Large ribosomal subunit protein bL31B, found in Erwinia tasmaniensis (strain DSM 17950 / CFBP 7177 / CIP 109463 / NCPPB 4357 / Et1/99).